We begin with the raw amino-acid sequence, 89 residues long: Albumin-1 (89 aa).

A signal peptide is located at residue Ala-1. 3 disulfides stabilise this stretch: Cys-4-Cys-21, Cys-8-Cys-23, and Cys-16-Cys-33. A propeptide spanning residues 39–46 is cleaved from the precursor; sequence LSSVAKMI.

In terms of processing, the C-terminal glycine may be removed from A1b.

In terms of biological role, A1b binds to basic 7S globulin (BG) and stimulates its phosphorylation activity. This Vigna radiata var. radiata (Mung bean) protein is Albumin-1 (LEG).